The primary structure comprises 91 residues: DNA-binding protein HU-beta 2 (91 aa).

This sequence belongs to the bacterial histone-like protein family.

In terms of biological role, histone-like DNA-binding protein which is capable of wrapping DNA to stabilize it, and thus to prevent its denaturation under extreme environmental conditions. In Neisseria meningitidis serogroup A / serotype 4A (strain DSM 15465 / Z2491), this protein is DNA-binding protein HU-beta 2 (hupB2).